Reading from the N-terminus, the 180-residue chain is MSTRFQEHYQEKVVADLITKFGYKSVMEVPRITKVTLNMGLGDAVNDKKIIENAVGDLTKVAGQKPVVTKAKKAIAGFKIRQGYPIGAMVTLRGQRMYEFLDRFVTVALPRVRDFRGISGKAFDGRGNYNIGVKEQIIFPEIEYDKIDALRGLNISITTTAKTDEEAKALLAAFKFPFRN.

The protein belongs to the universal ribosomal protein uL5 family. As to quaternary structure, part of the 50S ribosomal subunit; part of the 5S rRNA/L5/L18/L25 subcomplex. Contacts the 5S rRNA and the P site tRNA. Forms a bridge to the 30S subunit in the 70S ribosome.

In terms of biological role, this is one of the proteins that bind and probably mediate the attachment of the 5S RNA into the large ribosomal subunit, where it forms part of the central protuberance. In the 70S ribosome it contacts protein S13 of the 30S subunit (bridge B1b), connecting the 2 subunits; this bridge is implicated in subunit movement. Contacts the P site tRNA; the 5S rRNA and some of its associated proteins might help stabilize positioning of ribosome-bound tRNAs. This Polynucleobacter asymbioticus (strain DSM 18221 / CIP 109841 / QLW-P1DMWA-1) (Polynucleobacter necessarius subsp. asymbioticus) protein is Large ribosomal subunit protein uL5.